The following is a 181-amino-acid chain: Isopentenyl-diphosphate Delta-isomerase (181 aa).

Residues H25 and H32 each contribute to the Mn(2+) site. Positions 30–164 (PLHLAFSCWL…PWAFSPWMVM (135 aa)) constitute a Nudix hydrolase domain. C67 is a catalytic residue. Residue H69 participates in Mn(2+) binding. Position 87 (E87) interacts with Mg(2+). Positions 114 and 116 each coordinate Mn(2+). Residue E116 is part of the active site.

It belongs to the IPP isomerase type 1 family. In terms of assembly, homodimer. Requires Mg(2+) as cofactor. Mn(2+) serves as cofactor.

The protein localises to the cytoplasm. The catalysed reaction is isopentenyl diphosphate = dimethylallyl diphosphate. It functions in the pathway isoprenoid biosynthesis; dimethylallyl diphosphate biosynthesis; dimethylallyl diphosphate from isopentenyl diphosphate: step 1/1. Functionally, catalyzes the 1,3-allylic rearrangement of the homoallylic substrate isopentenyl (IPP) to its highly electrophilic allylic isomer, dimethylallyl diphosphate (DMAPP). The polypeptide is Isopentenyl-diphosphate Delta-isomerase (Salmonella paratyphi B (strain ATCC BAA-1250 / SPB7)).